A 490-amino-acid chain; its full sequence is Chromosomal replication initiator protein DnaA (490 aa).

Residues 1 to 75 (MAVSSDAEQK…SELWKQEDAD (75 aa)) are domain I, interacts with DnaA modulators. The tract at residues 75–145 (DLLKIEIVVR…SEFRHNVLGS (71 aa)) is domain II. A domain III, AAA+ region region spans residues 146–368 (PLDPRYTFGS…GAFNQLLFRQ (223 aa)). Positions 192, 194, 195, and 196 each coordinate ATP. Residues 369–490 (SFEPQITIDR…LLRRLINDQA (122 aa)) form a domain IV, binds dsDNA region.

The protein belongs to the DnaA family. As to quaternary structure, oligomerizes as a right-handed, spiral filament on DNA at oriC.

It is found in the cytoplasm. Functionally, plays an essential role in the initiation and regulation of chromosomal replication. ATP-DnaA binds to the origin of replication (oriC) to initiate formation of the DNA replication initiation complex once per cell cycle. Binds the DnaA box (a 9 base pair repeat at the origin) and separates the double-stranded (ds)DNA. Forms a right-handed helical filament on oriC DNA; dsDNA binds to the exterior of the filament while single-stranded (ss)DNA is stabiized in the filament's interior. The ATP-DnaA-oriC complex binds and stabilizes one strand of the AT-rich DNA unwinding element (DUE), permitting loading of DNA polymerase. After initiation quickly degrades to an ADP-DnaA complex that is not apt for DNA replication. Binds acidic phospholipids. This chain is Chromosomal replication initiator protein DnaA, found in Mesorhizobium japonicum (strain LMG 29417 / CECT 9101 / MAFF 303099) (Mesorhizobium loti (strain MAFF 303099)).